A 259-amino-acid chain; its full sequence is uncharacterized protein (259 aa).

The tract at residues 171–259 (LSKMPVPQSP…SYSTYEDDDF (89 aa)) is disordered. Over residues 179 to 201 (SPSVPTMPSVNNDQPTQKPNKIT) the composition is skewed to polar residues. Positions 202-211 (RNYKPKHQHN) are enriched in basic residues. Positions 212–236 (YKPNYQPNYQPNYGQNCSNSHSNDY) are enriched in polar residues.

It is found in the virion. This is an uncharacterized protein from Acanthamoeba polyphaga (Amoeba).